The primary structure comprises 589 residues: NADP-dependent malic enzyme (589 aa).

Residue tyrosine 137 is the Proton donor of the active site. Position 190 (arginine 190) interacts with NAD(+). The Proton acceptor role is filled by lysine 208. Residues glutamate 280, aspartate 281, and aspartate 304 each coordinate a divalent metal cation. Aspartate 304 provides a ligand contact to NAD(+). 333–349 (LFLGAGEAGTGIAELIA) contributes to the NADP(+) binding site. Asparagine 445 contributes to the NAD(+) binding site.

This sequence belongs to the malic enzymes family. In terms of assembly, homotetramer. Mg(2+) serves as cofactor. Requires Mn(2+) as cofactor.

Its subcellular location is the cytoplasm. The enzyme catalyses (S)-malate + NADP(+) = pyruvate + CO2 + NADPH. It catalyses the reaction oxaloacetate + H(+) = pyruvate + CO2. The chain is NADP-dependent malic enzyme (ME1) from Phaseolus vulgaris (Kidney bean).